The chain runs to 67 residues: Large ribosomal subunit protein bL35 (67 aa).

Belongs to the bacterial ribosomal protein bL35 family.

The sequence is that of Large ribosomal subunit protein bL35 from Brachyspira hyodysenteriae (strain ATCC 49526 / WA1).